The sequence spans 430 residues: Adenylosuccinate synthetase (430 aa).

GTP-binding positions include Gly-13–Lys-19 and Gly-41–Thr-43. Catalysis depends on Asp-14, which acts as the Proton acceptor. Mg(2+)-binding residues include Asp-14 and Gly-41. IMP contacts are provided by residues Asp-14–Lys-17, Asn-39–His-42, Thr-130, Arg-144, Gln-225, Thr-240, and Arg-304. Residue His-42 is the Proton donor of the active site. Position 300-306 (Ala-300–Arg-306) interacts with substrate. GTP-binding positions include Arg-306, Lys-332–Asp-334, and Ser-414–Gly-416.

The protein belongs to the adenylosuccinate synthetase family. In terms of assembly, homodimer. Mg(2+) serves as cofactor.

The protein localises to the cytoplasm. It catalyses the reaction IMP + L-aspartate + GTP = N(6)-(1,2-dicarboxyethyl)-AMP + GDP + phosphate + 2 H(+). It participates in purine metabolism; AMP biosynthesis via de novo pathway; AMP from IMP: step 1/2. Plays an important role in the de novo pathway of purine nucleotide biosynthesis. Catalyzes the first committed step in the biosynthesis of AMP from IMP. The sequence is that of Adenylosuccinate synthetase from Xanthomonas axonopodis pv. citri (strain 306).